Consider the following 268-residue polypeptide: Ribosomal RNA small subunit methyltransferase A (268 aa).

The S-adenosyl-L-methionine site is built by N23, I25, G50, E72, D97, and N116.

It belongs to the class I-like SAM-binding methyltransferase superfamily. rRNA adenine N(6)-methyltransferase family. RsmA subfamily.

The protein resides in the cytoplasm. It carries out the reaction adenosine(1518)/adenosine(1519) in 16S rRNA + 4 S-adenosyl-L-methionine = N(6)-dimethyladenosine(1518)/N(6)-dimethyladenosine(1519) in 16S rRNA + 4 S-adenosyl-L-homocysteine + 4 H(+). Its function is as follows. Specifically dimethylates two adjacent adenosines (A1518 and A1519) in the loop of a conserved hairpin near the 3'-end of 16S rRNA in the 30S particle. May play a critical role in biogenesis of 30S subunits. In Rickettsia prowazekii (strain Madrid E), this protein is Ribosomal RNA small subunit methyltransferase A.